A 315-amino-acid polypeptide reads, in one-letter code: Shiga-like toxin 1 subunit A (315 aa).

Positions 1-22 (MKIIIFRVLTFFFVIFSVNVVA) are cleaved as a signal peptide. An A1 region spans residues 23-273 (KEFTLDFSTA…CHHHASRVAR (251 aa)). The active site involves Glu-189. Residues Cys-264 and Cys-283 are joined by a disulfide bond. An A2 region spans residues 274-315 (MASDEFPSMCPADGRVRGITHNKILWDSSTLGAILMRRTISS).

It belongs to the ribosome-inactivating protein family. As to quaternary structure, shiga-like toxin contains a single subunit A and five copies of subunit B.

The protein resides in the secreted. It carries out the reaction Endohydrolysis of the N-glycosidic bond at one specific adenosine on the 28S rRNA.. Functionally, the A subunit is responsible for inhibiting protein synthesis through the catalytic inactivation of 60S ribosomal subunits. After endocytosis, the A subunit is cleaved by furin in two fragments, A1 and A2: A1 is the catalytically active fragment, and A2 is essential for holotoxin assembly with the B subunits. This is Shiga-like toxin 1 subunit A (stxA) from Escherichia coli (Bacteriophage H19B).